A 295-amino-acid chain; its full sequence is Light-independent protochlorophyllide reductase iron-sulfur ATP-binding protein (295 aa).

Residues 39–44 (GIGKST) and lysine 68 each bind ATP. Residue serine 43 participates in Mg(2+) binding. [4Fe-4S] cluster-binding residues include cysteine 124 and cysteine 158. 209-210 (NR) lines the ATP pocket.

The protein belongs to the NifH/BchL/ChlL family. Homodimer. Protochlorophyllide reductase is composed of three subunits; ChlL, ChlN and ChlB. Requires [4Fe-4S] cluster as cofactor.

It carries out the reaction chlorophyllide a + oxidized 2[4Fe-4S]-[ferredoxin] + 2 ADP + 2 phosphate = protochlorophyllide a + reduced 2[4Fe-4S]-[ferredoxin] + 2 ATP + 2 H2O. Its pathway is porphyrin-containing compound metabolism; chlorophyll biosynthesis (light-independent). In terms of biological role, component of the dark-operative protochlorophyllide reductase (DPOR) that uses Mg-ATP and reduced ferredoxin to reduce ring D of protochlorophyllide (Pchlide) to form chlorophyllide a (Chlide). This reaction is light-independent. The L component serves as a unique electron donor to the NB-component of the complex, and binds Mg-ATP. This chain is Light-independent protochlorophyllide reductase iron-sulfur ATP-binding protein, found in Prochlorococcus marinus (strain MIT 9301).